The following is a 477-amino-acid chain: Probable malate:quinone oxidoreductase (477 aa).

The protein belongs to the MQO family. It depends on FAD as a cofactor.

The catalysed reaction is (S)-malate + a quinone = a quinol + oxaloacetate. The protein operates within carbohydrate metabolism; tricarboxylic acid cycle; oxaloacetate from (S)-malate (quinone route): step 1/1. In Synechococcus sp. (strain RCC307), this protein is Probable malate:quinone oxidoreductase.